Reading from the N-terminus, the 289-residue chain is Prepilin leader peptidase/N-methyltransferase (289 aa).

The chain crosses the membrane as a helical span at residues 13 to 33 (AFVLCALVLGLLVGSFLNVVI). Zn(2+) contacts are provided by C72, C75, C97, and C100. A run of 5 helical transmembrane segments spans residues 128 to 148 (FSWQ…MSMI), 159 to 179 (LVLP…FASL), 183 to 203 (LWGA…FKLV), 228 to 248 (VLPL…TVML), and 256 to 276 (GTPI…LLWG).

It belongs to the peptidase A24 family. Zn(2+) is required as a cofactor.

It localises to the cell inner membrane. It carries out the reaction Typically cleaves a -Gly-|-Phe- bond to release an N-terminal, basic peptide of 5-8 residues from type IV prepilin, and then N-methylates the new N-terminal amino group, the methyl donor being S-adenosyl-L-methionine.. Functionally, plays an essential role in type IV pili and type II pseudopili formation by proteolytically removing the leader sequence from substrate proteins and subsequently monomethylating the alpha-amino group of the newly exposed N-terminal phenylalanine. In Stutzerimonas stutzeri (Pseudomonas stutzeri), this protein is Prepilin leader peptidase/N-methyltransferase (pilD).